The following is a 622-amino-acid chain: E3 ubiquitin-protein ligase RNF12-A (622 aa).

Disordered stretches follow at residues Met1 to Leu26, Arg67 to Arg386, and Asn473 to Gly514. Residues Ser11–Ser21 show a composition bias toward low complexity. Composition is skewed to polar residues over residues Ser110–Ser138 and Ile147–Gln163. Residues Arg216–Ile242 show a composition bias toward basic and acidic residues. Residues His247–Ser256 are compositionally biased toward polar residues. Residues Ser272 to Arg289 show a composition bias toward low complexity. Polar residues predominate over residues Val300 to Glu317. A compositionally biased stretch (low complexity) spans Thr318 to Thr331. Residues Asn332–Arg341 show a composition bias toward polar residues. Basic and acidic residues predominate over residues Arg355–Ile365. Residues Ala366 to Tyr382 are compositionally biased toward polar residues. An RING-type; atypical zinc finger spans residues Cys568–Arg609. A PDZ-binding motif is present at residues Glu619 to Val622.

Belongs to the RNF12 family. Forms homodimers through the C-terminal region. The N-terminus interacts with the homeobox of LIM/homeobox factor lhx1/lim1, with lhx3/lim3 and lhx5/lim5, and with the N-terminus of ldb1. Shows overlapping expression with lhx1/lim1 and ldb1 in the gastrula mesoderm, and expression overlaps with ldb1 throughout early embryogenesis. After gastrulation, expression is gradually restricted to tissues originated from the ectoderm, the neuroectoderm, neural crest and epidermis, and subsequently to the neural tube as well as the head and tailbud region.

It localises to the nucleus. It carries out the reaction S-ubiquitinyl-[E2 ubiquitin-conjugating enzyme]-L-cysteine + [acceptor protein]-L-lysine = [E2 ubiquitin-conjugating enzyme]-L-cysteine + N(6)-ubiquitinyl-[acceptor protein]-L-lysine.. It participates in protein modification; protein ubiquitination. Acts as an E3 ubiquitin-protein ligase specific for ldb1, mediating ubiquitination and proteasome-dependent degradation of excess ldb1 in a RING-dependent manner. Does not degrade ldb1 bound to lhx1/lim1, nor lim1 itself and thus contributes to the establishment of proper ldb1-lhx1/lim1 stoichiometry and the formation of a ldb1-lhx1/lim1 complex. Interferes with Spemann organizer function and suppresses secondary axis formation induced by ldb1 and lhx1/lim1. This Xenopus laevis (African clawed frog) protein is E3 ubiquitin-protein ligase RNF12-A (rnf12-a).